The primary structure comprises 390 residues: HIT domain-containing protein DDB_G0272839 (390 aa).

The interval 168-201 (DNENEKEKEKEMELDNDNTNTESIPPITSKSTST) is disordered. The segment covering 184-201 (DNTNTESIPPITSKSTST) has biased composition (low complexity). The region spanning 232–343 (YFCNKPESFL…ISNDYNTKYL (112 aa)) is the HIT domain.

This chain is HIT domain-containing protein DDB_G0272839, found in Dictyostelium discoideum (Social amoeba).